A 298-amino-acid polypeptide reads, in one-letter code: tRNA dimethylallyltransferase (298 aa).

10–17 (GPTASGKT) is an ATP binding site. 12 to 17 (TASGKT) lines the substrate pocket. An interaction with substrate tRNA region spans residues 35–38 (DSMC).

This sequence belongs to the IPP transferase family. In terms of assembly, monomer. Mg(2+) serves as cofactor.

The catalysed reaction is adenosine(37) in tRNA + dimethylallyl diphosphate = N(6)-dimethylallyladenosine(37) in tRNA + diphosphate. Its function is as follows. Catalyzes the transfer of a dimethylallyl group onto the adenine at position 37 in tRNAs that read codons beginning with uridine, leading to the formation of N6-(dimethylallyl)adenosine (i(6)A). This is tRNA dimethylallyltransferase from Hydrogenobaculum sp. (strain Y04AAS1).